The chain runs to 305 residues: Nucleotide-binding protein Saro_2904 (305 aa).

15 to 22 is a binding site for ATP; sequence GLLGAGKT. Residue 68–71 coordinates GTP; that stretch reads DTRT.

This sequence belongs to the RapZ-like family.

In terms of biological role, displays ATPase and GTPase activities. This Novosphingobium aromaticivorans (strain ATCC 700278 / DSM 12444 / CCUG 56034 / CIP 105152 / NBRC 16084 / F199) protein is Nucleotide-binding protein Saro_2904.